The sequence spans 165 residues: MTVAVYPGTFDPFTRGHEDLVRRASSIFKELIVGVADSRSKHPFFTLEERIDIAKEVLGYYPNVKVVGFSGLLKDFAREHNARVIVRGLRAVSDFEYEFQMAGMNRYLLPDVETLFLTPSDQYQFISGTFVREIASMGGDVSKFVFPSVEKWLVKKIASDSQNKE.

Residue T9 coordinates substrate. Residues 9–10 (TF) and H17 each bind ATP. Residues K41, L73, and R87 each contribute to the substrate site. ATP contacts are provided by residues 88–90 (GLR), E98, and 123–129 (YQFISGT).

This sequence belongs to the bacterial CoaD family. In terms of assembly, homohexamer. Mg(2+) is required as a cofactor.

The protein resides in the cytoplasm. The catalysed reaction is (R)-4'-phosphopantetheine + ATP + H(+) = 3'-dephospho-CoA + diphosphate. The protein operates within cofactor biosynthesis; coenzyme A biosynthesis; CoA from (R)-pantothenate: step 4/5. Functionally, reversibly transfers an adenylyl group from ATP to 4'-phosphopantetheine, yielding dephospho-CoA (dPCoA) and pyrophosphate. In Polynucleobacter necessarius subsp. necessarius (strain STIR1), this protein is Phosphopantetheine adenylyltransferase.